The chain runs to 215 residues: Methylosome subunit pICln (215 aa).

Disordered regions lie at residues 88–120 (GDPP…DEDD) and 160–215 (HPDS…DADE). Acidic residues-rich tracts occupy residues 105–120 (AEVD…DEDD), 167–190 (DSED…EDDA), and 203–215 (LDDD…DADE).

This sequence belongs to the pICln (TC 1.A.47) family. In terms of assembly, component of the methylosome, a 20S complex containing at least CLNS1A/pICln, PRMT5/SKB1 and WDR77/MEP50; may mediate SNRPD1 and SNRPD3 methylation. Forms a 6S pICln-Sm complex composed of CLNS1A/pICln, SNRPD1, SNRPD2, SNRPE, SNRPF and SNRPG; ring-like structure where CLNS1A/pICln mimics additional Sm proteins and which is unable to assemble into the core snRNP.

The protein resides in the cytoplasm. The protein localises to the cytosol. Its subcellular location is the nucleus. It localises to the cytoskeleton. Involved in both the assembly of spliceosomal snRNPs and the methylation of Sm proteins. Chaperone that regulates the assembly of spliceosomal U1, U2, U4 and U5 small nuclear ribonucleoproteins (snRNPs), the building blocks of the spliceosome, and thereby plays an important role in the splicing of cellular pre-mRNAs. Most spliceosomal snRNPs contain a common set of Sm proteins SNRPB, SNRPD1, SNRPD2, SNRPD3, SNRPE, SNRPF and SNRPG that assemble in a heptameric protein ring on the Sm site of the small nuclear RNA to form the core snRNP (Sm core). In the cytosol, the Sm proteins SNRPD1, SNRPD2, SNRPE, SNRPF and SNRPG are trapped in an inactive 6S pICln-Sm complex by the chaperone CLNS1A that controls the assembly of the core snRNP. Dissociation by the SMN complex of CLNS1A from the trapped Sm proteins and their transfer to an SMN-Sm complex triggers the assembly of core snRNPs and their transport to the nucleus. This chain is Methylosome subunit pICln (icln), found in Drosophila melanogaster (Fruit fly).